A 258-amino-acid polypeptide reads, in one-letter code: MAKLIPTIALVSVLLFIIANASFAYRTTITTIEIDESKGEREGSSSQQCRQEVQRKDLSSCERYLRQSSSRRSPGEEVLRMPGDENQQQESQQLQQCCNQVKQVRDECQCEAIKYIAEDQIQQGQLHGEESERVAQRAGEIVSSCGVRCMRQTRTNPSQQGCRGQIQEQQNLRQCQEYIKQQVSGQGPRRSDNQERSLRGCCDHLKQMQSQCRCEGLRQAIEQQQSQGQLQGQDVFEAFRTAANLPSMCGVSPTECRF.

Positions 1–24 (MAKLIPTIALVSVLLFIIANASFA) are cleaved as a signal peptide. Positions 25-35 (YRTTITTIEID) are excised as a propeptide. Cystine bridges form between Cys-49/Cys-108, Cys-61/Cys-97, Cys-98/Cys-145, and Cys-110/Cys-149. Residues 64 to 87 (YLRQSSSRRSPGEEVLRMPGDENQ) form a disordered region. Ser-69 carries the post-translational modification Phosphoserine. Residues 73-83 (SPGEEVLRMPG) are compositionally biased toward basic and acidic residues. Positions 77-86 (EVLRMPGDEN) are excised as a propeptide. Residue Gln-87 is modified to Pyrrolidone carboxylic acid. 2 propeptides span residues 154–156 (RTN) and 191–193 (SDN). 4 disulfide bridges follow: Cys-162–Cys-212, Cys-175–Cys-201, Cys-202–Cys-249, and Cys-214–Cys-256. At Gln-194 the chain carries Pyrrolidone carboxylic acid.

The protein belongs to the 2S seed storage albumins family. The 2 mature proteins consist of heterodimers of a small and a large chain; disulfide-linked. In terms of processing, the N-terminus of both large chains is blocked. The C-terminus of the allergen Ric c 1 and allergen Ric c 3 small chains are heterogeneous and the length of the chains can vary from 33 to 36 amino acids and from 36 to 40 amino acids respectively.

Functionally, 2S seed storage proteins. The sequence is that of 2S seed storage albumin protein from Ricinus communis (Castor bean).